Here is a 330-residue protein sequence, read N- to C-terminus: MINFSSFYQQIADSNLQHWLETLPAILGKWQREHKHGNLPKWEKVLNKLHYPSPDSVDLVDSVTIGTGEQLTPGEKEKLENLLRLFMPWRKGPFHIHGIHIDTEWRSDWKWDRVKPHISPLQNRTVLDVGCGSGYHMWRMLGAGAKRVVGIDPSPLFLCQFEAVKRLSGENHPVHLLPLGIEELPPLDAFDTVFSMGVLYHRRSPIDHLLQLRDQLRMGGELVLETLVIDGDENAVLVPQDRYGKMNNVWFIPSVAALMLWLKKCDFTDIRCVDTDVTALAEQRRTDWMPNESLVEYLDPKDITKTVEGYPAPKRATIIAVKNQPNQDLS.

Residues Lys91, Trp105, Lys110, Gly130, 152–154 (DPS), 181–182 (IE), Met196, Tyr200, and Arg315 contribute to the carboxy-S-adenosyl-L-methionine site.

This sequence belongs to the class I-like SAM-binding methyltransferase superfamily. CmoB family. Homotetramer.

The enzyme catalyses carboxy-S-adenosyl-L-methionine + 5-hydroxyuridine(34) in tRNA = 5-carboxymethoxyuridine(34) in tRNA + S-adenosyl-L-homocysteine + H(+). Catalyzes carboxymethyl transfer from carboxy-S-adenosyl-L-methionine (Cx-SAM) to 5-hydroxyuridine (ho5U) to form 5-carboxymethoxyuridine (cmo5U) at position 34 in tRNAs. This Shewanella oneidensis (strain ATCC 700550 / JCM 31522 / CIP 106686 / LMG 19005 / NCIMB 14063 / MR-1) protein is tRNA U34 carboxymethyltransferase.